Reading from the N-terminus, the 265-residue chain is Putative cysteine-rich receptor-like protein kinase At4g11521 (265 aa).

A signal peptide spans 1 to 23 (MMLNTLFLPIFLFFLITFDYVST). Gnk2-homologous domains lie at 24 to 122 (QTCF…NISF) and 128 to 241 (MEPS…LYPF). 3 N-linked (GlcNAc...) asparagine glycosylation sites follow: N34, N102, and N119. N247 carries an N-linked (GlcNAc...) asparagine glycan.

Belongs to the protein kinase superfamily. Ser/Thr protein kinase family. CRK subfamily.

The protein resides in the secreted. The polypeptide is Putative cysteine-rich receptor-like protein kinase At4g11521 (Arabidopsis thaliana (Mouse-ear cress)).